Here is a 364-residue protein sequence, read N- to C-terminus: Alpha-2-HS-glycoprotein (364 aa).

The segment at residues 1–15 is a signal peptide (or 17); it reads MKSFLLLFCLAQLCS. The Cystatin fetuin-A-type 1 domain maps to 27-133; the sequence is YKEPACDDPD…QFSVLFTKCD (107 aa). Disulfide bonds link Cys-32–Cys-355, Cys-89–Cys-100, Cys-114–Cys-132, Cys-146–Cys-149, Cys-208–Cys-219, and Cys-230–Cys-248. An N-linked (GlcNAc...) asparagine glycan is attached at Asn-99. Phosphoserine occurs at positions 134, 135, and 138. Positions 144-256 constitute a Cystatin fetuin-A-type 2 domain; that stretch reads KLCPDCPLLA…TCTLFQTQPV (113 aa). Residues Asn-156 and Asn-176 are each glycosylated (N-linked (GlcNAc...) asparagine). Ser-301 is a glycosylation site (O-linked (GalNAc...) serine). At Thr-319 the chain carries Phosphothreonine. Phosphoserine occurs at positions 321, 325, 328, and 330. O-linked (GalNAc...) threonine glycosylation is present at Thr-339.

This sequence belongs to the fetuin family. Post-translationally, phosphorylated by FAM20C in the extracellular medium.

The protein localises to the secreted. The sequence is that of Alpha-2-HS-glycoprotein (AHSG) from Ovis aries (Sheep).